A 464-amino-acid polypeptide reads, in one-letter code: MTVKTRFAPSPTGYLHIGGVRTALFSWAFARHHKGEFLLRIEDTDLARSTAESVNIILDGMKWVGLNYDNADNVVYQTRRFDRYKEVIAELLEKGHAYYCYCSKEELEAMREKAEKEGSATYDRRWRPEVGKTLPEIPSDVQPVVRFKTPLDGVTKWTDLVKGEISIPNEALDDLIIARADGTPTYNFCVVVDDYDMGVTHVIRGDDHVNNTPKQINILKAIDANLPEYGHLPMILNEQGKKISKRSGDTVAITDFGAMGILPEAMLNYLARLGWAHGDDEFFTMEQFIEWFDLKDVSPSPSRMDLKKLYWINGEHIKITPNGKLAELVKPRLALRDIHETEKPALEDVLELVKDRPQDLNTLADECFYFYVKQTPAEADVQKHWDDEAAARMLRFAERLEGLEDWNAEAIHDLFKPFCDEEGIKMGKLGMPLRLAVCGTAKTPSVDAVLALIGKEEVLKRIRA.

A 'HIGH' region motif is present at residues 9–19 (PSPTGYLHIGG). Residues 242–246 (KISKR) carry the 'KMSKS' region motif. Residue Lys245 participates in ATP binding.

It belongs to the class-I aminoacyl-tRNA synthetase family. Glutamate--tRNA ligase type 1 subfamily. Monomer.

It is found in the cytoplasm. The enzyme catalyses tRNA(Glu) + L-glutamate + ATP = L-glutamyl-tRNA(Glu) + AMP + diphosphate. Functionally, catalyzes the attachment of glutamate to tRNA(Glu) in a two-step reaction: glutamate is first activated by ATP to form Glu-AMP and then transferred to the acceptor end of tRNA(Glu). This Neisseria meningitidis serogroup B (strain ATCC BAA-335 / MC58) protein is Glutamate--tRNA ligase.